A 103-amino-acid polypeptide reads, in one-letter code: MRSLLLLTVLAALVVAILCYESHESMESYEINPFINRRNANTFMSPQQRWMAKAQERVREQRKPAYELNREACDDYKLCERYAMVYGYNAAYNRYFRQRRRAE.

The signal sequence occupies residues 1–19 (MRSLLLLTVLAALVVAILC). A 4-carboxyglutamate modification is found at Glu21. Phosphoserine occurs at positions 22, 25, and 28. The Gla domain occupies 51–97 (MAKAQERVREQRKPAYELNREACDDYKLCERYAMVYGYNAAYNRYFR). 4-carboxyglutamate is present on residues Glu56, Glu60, Glu67, and Glu71. The cysteines at positions 73 and 79 are disulfide-linked.

Belongs to the osteocalcin/matrix Gla protein family. In terms of processing, requires vitamin K-dependent gamma-carboxylation for its function.

It is found in the secreted. In terms of biological role, associates with the organic matrix of bone and cartilage. Thought to act as an inhibitor of bone formation. The sequence is that of Matrix Gla protein (MGP) from Oryctolagus cuniculus (Rabbit).